Reading from the N-terminus, the 277-residue chain is Undecaprenyl-diphosphatase (277 aa).

A run of 6 helical transmembrane segments spans residues 53 to 73 (LGAI…VILG), 85 to 105 (VNLL…ADLI), 108 to 128 (WLFN…VMLW), 183 to 203 (AATE…AAYS), 215 to 235 (GDLP…MLAV), and 250 to 270 (FAWY…LGVV).

It belongs to the UppP family.

Its subcellular location is the cell inner membrane. It catalyses the reaction di-trans,octa-cis-undecaprenyl diphosphate + H2O = di-trans,octa-cis-undecaprenyl phosphate + phosphate + H(+). Its function is as follows. Catalyzes the dephosphorylation of undecaprenyl diphosphate (UPP). Confers resistance to bacitracin. This chain is Undecaprenyl-diphosphatase, found in Azotobacter vinelandii (strain DJ / ATCC BAA-1303).